The following is a 1704-amino-acid chain: Phospholipid-transporting ATPase ABCA3 (1704 aa).

An N-linked (GlcNAc...) asparagine glycan is attached at Asn14. Residues 22-42 (VLVTVLELFLPLLFSGILIWL) traverse the membrane as a helical segment. Asn53, Asn124, and Asn140 each carry an N-linked (GlcNAc...) asparagine glycan. 6 helical membrane-spanning segments follow: residues 261-283 (YQLP…RAVV), 307-327 (AWFL…TLLF), 344-364 (SLVL…SFMV), 373-393 (MAAA…FFVA), 405-425 (LCSC…IGKF), and 447-467 (FCFG…GLVT). Residues 530 to 763 (IKIKHLSKVF…YGAGYHMTLV (234 aa)) form the ABC transporter 1 domain. 566 to 573 (GHNGAGKT) serves as a coordination point for ATP. Asn620 and Asn783 each carry an N-linked (GlcNAc...) asparagine glycan. The next 7 helical transmembrane spans lie at 925–945 (MVAA…LAIN), 1100–1120 (IALN…ILAV), 1144–1164 (SALL…LVVF), 1183–1203 (LLLL…NFFF), 1213–1233 (LTIF…IMRI), 1245–1265 (LDHV…SSFY), and 1306–1326 (FVAS…LIET). An ABC transporter 2 domain is found at 1381-1614 (LIIKELSKVY…FGSGYSLRAK (234 aa)). Residue 1416–1423 (GFNGAGKT) coordinates ATP.

The protein belongs to the ABC transporter superfamily. ABCA family. As to quaternary structure, homooligomer; disulfide-linked. N-glycosylated. Localization at intracellular vesicles is accompanied by processing of oligosaccharide from high mannose type to complex type. N-linked glycosylation at Asn-124 and Asn-140 is required for stability and efficient anterograde trafficking and prevents from proteasomal degradation. Post-translationally, proteolytically cleaved by CTSL and to a lower extent by CTSB within multivesicular bodies (MVB) and lamellar bodies (LB) leading to a mature form of 150 kDa. As to expression, expressed in brain, pancreas, skeletal muscle and heart. Highly expressed in the lung in an AT2-cell-specific manner. Weakly expressed in placenta, kidney and liver. Also expressed in medullary thyroid carcinoma cells (MTC) and in C-cell carcinoma.

It is found in the endosome. It localises to the multivesicular body membrane. Its subcellular location is the cytoplasmic vesicle membrane. The protein localises to the late endosome membrane. The protein resides in the lysosome membrane. The enzyme catalyses ATP + H2O + xenobioticSide 1 = ADP + phosphate + xenobioticSide 2.. It carries out the reaction a 1,2-diacyl-sn-glycero-3-phosphocholine(in) + ATP + H2O = a 1,2-diacyl-sn-glycero-3-phosphocholine(out) + ADP + phosphate + H(+). The catalysed reaction is ATP + H2O + phospholipidSide 1 = ADP + phosphate + phospholipidSide 2.. It catalyses the reaction 1,2-dihexadecanoyl-sn-glycero-3-phosphocholine(in) + ATP + H2O = 1,2-dihexadecanoyl-sn-glycero-3-phosphocholine(out) + ADP + phosphate + H(+). The enzyme catalyses cholesterol(in) + ATP + H2O = cholesterol(out) + ADP + phosphate + H(+). It carries out the reaction a 1,2-diacyl-sn-glycero-3-phospho-(1'-sn-glycerol)(in) + ATP + H2O = a 1,2-diacyl-sn-glycero-3-phospho-(1'-sn-glycerol)(out) + ADP + phosphate + H(+). The ATP-dependent phosphatidylcholine transport is competitively inhibited by miltefosine. Functionally, catalyzes the ATP-dependent transport of phospholipids such as phosphatidylcholine and phosphoglycerol from the cytoplasm into the lumen side of lamellar bodies, in turn participates in the lamellar bodies biogenesis and homeostasis of pulmonary surfactant. Transports preferentially phosphatidylcholine containing short acyl chains. In addition plays a role as an efflux transporter of miltefosine across macrophage membranes and free cholesterol (FC) through intralumenal vesicles by removing FC from the cell as a component of surfactant and protects cells from free cholesterol toxicity. This Homo sapiens (Human) protein is Phospholipid-transporting ATPase ABCA3.